The sequence spans 184 residues: Probable DNA-directed RNA polymerase subunit delta (184 aa).

The HTH HARE-type domain occupies 14-82 (KSFIDMAHTL…GENNWGLRDW (69 aa)). The interval 114 to 184 (LLGEEEEEID…FNDDPDDDKI (71 aa)) is disordered. Over residues 117 to 184 (EEEEEIDDQE…FNDDPDDDKI (68 aa)) the composition is skewed to acidic residues.

The protein belongs to the RpoE family. RNAP is composed of a core of 2 alpha, a beta and a beta' subunits. The core is associated with a delta subunit and one of several sigma factors.

Its function is as follows. Participates in both the initiation and recycling phases of transcription. In the presence of the delta subunit, RNAP displays an increased specificity of transcription, a decreased affinity for nucleic acids, and an increased efficiency of RNA synthesis because of enhanced recycling. The protein is Probable DNA-directed RNA polymerase subunit delta of Staphylococcus carnosus (strain TM300).